A 214-amino-acid chain; its full sequence is Adenylate kinase (214 aa).

ATP is bound at residue 10 to 15 (GAGKGT). The NMP stretch occupies residues 30–59 (STGDMLRAAIKAGTELGKQAKSVIDAGQLV). AMP contacts are provided by residues Thr-31, Arg-36, 57-59 (QLV), 85-88 (GFPR), and Gln-92. The tract at residues 122–159 (GRRAHLPSGRTYHVVYNPPKEEGKDDETGEPLVIREDD) is LID. Residues Arg-123 and 132–133 (TY) each bind ATP. The AMP site is built by Arg-156 and Arg-167. Position 200 (Lys-200) interacts with ATP.

Belongs to the adenylate kinase family. Monomer.

It is found in the cytoplasm. It catalyses the reaction AMP + ATP = 2 ADP. It functions in the pathway purine metabolism; AMP biosynthesis via salvage pathway; AMP from ADP: step 1/1. Catalyzes the reversible transfer of the terminal phosphate group between ATP and AMP. Plays an important role in cellular energy homeostasis and in adenine nucleotide metabolism. The chain is Adenylate kinase from Aliivibrio fischeri (strain ATCC 700601 / ES114) (Vibrio fischeri).